The sequence spans 312 residues: Malate dehydrogenase (312 aa).

NAD(+)-binding positions include 7-13 and D34; that span reads GAAGGIG. Residues R81 and R87 each coordinate substrate. NAD(+) contacts are provided by residues N94 and 117–119; that span reads ITN. Substrate is bound by residues N119 and R153. Catalysis depends on H177, which acts as the Proton acceptor. M227 is a binding site for NAD(+).

It belongs to the LDH/MDH superfamily. MDH type 1 family. As to quaternary structure, homodimer.

It carries out the reaction (S)-malate + NAD(+) = oxaloacetate + NADH + H(+). Its function is as follows. Catalyzes the reversible oxidation of malate to oxaloacetate. This Salmonella agona (strain SL483) protein is Malate dehydrogenase.